We begin with the raw amino-acid sequence, 132 residues long: Neurophysin 2 (132 aa).

7 cysteine pairs are disulfide-bonded: cysteine 10-cysteine 54, cysteine 13-cysteine 27, cysteine 21-cysteine 44, cysteine 28-cysteine 34, cysteine 61-cysteine 73, cysteine 67-cysteine 85, and cysteine 74-cysteine 79.

Belongs to the vasopressin/oxytocin family.

Its subcellular location is the secreted. Functionally, neurophysin 2 specifically binds vasopressin. The sequence is that of Neurophysin 2 from Struthio camelus (Common ostrich).